The primary structure comprises 417 residues: Serine hydroxymethyltransferase (417 aa).

Residues L121 and 125-127 (GHL) contribute to the (6S)-5,6,7,8-tetrahydrofolate site. K229 bears the N6-(pyridoxal phosphate)lysine mark. 354–356 (SPF) provides a ligand contact to (6S)-5,6,7,8-tetrahydrofolate.

It belongs to the SHMT family. In terms of assembly, homodimer. Requires pyridoxal 5'-phosphate as cofactor.

It is found in the cytoplasm. The enzyme catalyses (6R)-5,10-methylene-5,6,7,8-tetrahydrofolate + glycine + H2O = (6S)-5,6,7,8-tetrahydrofolate + L-serine. It functions in the pathway one-carbon metabolism; tetrahydrofolate interconversion. It participates in amino-acid biosynthesis; glycine biosynthesis; glycine from L-serine: step 1/1. Functionally, catalyzes the reversible interconversion of serine and glycine with tetrahydrofolate (THF) serving as the one-carbon carrier. This reaction serves as the major source of one-carbon groups required for the biosynthesis of purines, thymidylate, methionine, and other important biomolecules. Also exhibits THF-independent aldolase activity toward beta-hydroxyamino acids, producing glycine and aldehydes, via a retro-aldol mechanism. The polypeptide is Serine hydroxymethyltransferase (Dichelobacter nodosus (strain VCS1703A)).